Here is a 277-residue protein sequence, read N- to C-terminus: Hydroxypyruvate/pyruvate aldolase (277 aa).

Catalysis depends on His54, which acts as the Proton acceptor. Residues Glu158 and Asp184 each contribute to the a divalent metal cation site.

Belongs to the HpcH/HpaI aldolase family. The cofactor is a divalent metal cation.

It carries out the reaction D-glyceraldehyde + 3-hydroxypyruvate = (3R,4S,5R)-3,4,5,6-tetrahydroxy-2-oxohexanoate. It catalyses the reaction D-glyceraldehyde + 3-hydroxypyruvate = 2-dehydro-D-gluconate. The enzyme catalyses D-glyceraldehyde + 3-hydroxypyruvate = 2-dehydro-D-galactonate. The catalysed reaction is D-glyceraldehyde + pyruvate = 2-dehydro-3-deoxy-L-galactonate. Aldolase which can catalyze in vitro the aldolisation reaction between hydroxypyruvate (HPA) or pyruvate (PA) and D-glyceraldehyde (D-GA). The condensation of hydroxypyruvate and D-glyceraldehyde produces (3R,4S,5R)-3,4,5,6-tetrahydroxy-2-oxohexanoate as the major product, 2-dehydro-D-gluconate and 2-dehydro-D-galactonate. The condensation of pyruvate and D-glyceraldehyde produces 2-dehydro-3-deoxy-L-galactonate as the major product. This Deinococcus radiodurans (strain ATCC 13939 / DSM 20539 / JCM 16871 / CCUG 27074 / LMG 4051 / NBRC 15346 / NCIMB 9279 / VKM B-1422 / R1) protein is Hydroxypyruvate/pyruvate aldolase.